A 130-amino-acid polypeptide reads, in one-letter code: Small ribosomal subunit protein eS8 (130 aa).

The protein belongs to the eukaryotic ribosomal protein eS8 family. As to quaternary structure, part of the 30S ribosomal subunit.

The sequence is that of Small ribosomal subunit protein eS8 from Ignicoccus hospitalis (strain KIN4/I / DSM 18386 / JCM 14125).